The following is a 348-amino-acid chain: Protein RecA (348 aa).

64–71 is a binding site for ATP; the sequence is GPESSGKT. Over residues 325–335 the composition is skewed to basic and acidic residues; it reads YEIDGANKEPL. Residues 325–348 are disordered; it reads YEIDGANKEPLEETEETLSLLDDE. The segment covering 336–348 has biased composition (acidic residues); it reads EETEETLSLLDDE.

Belongs to the RecA family.

The protein resides in the cytoplasm. Its function is as follows. Can catalyze the hydrolysis of ATP in the presence of single-stranded DNA, the ATP-dependent uptake of single-stranded DNA by duplex DNA, and the ATP-dependent hybridization of homologous single-stranded DNAs. It interacts with LexA causing its activation and leading to its autocatalytic cleavage. This Listeria welshimeri serovar 6b (strain ATCC 35897 / DSM 20650 / CCUG 15529 / CIP 8149 / NCTC 11857 / SLCC 5334 / V8) protein is Protein RecA.